A 351-amino-acid polypeptide reads, in one-letter code: sn-glycerol-3-phosphate import ATP-binding protein UgpC (351 aa).

One can recognise an ABC transporter domain in the interval 4–235 (IVLDNVRKSY…PASTFVATFI (232 aa)). Residue 37-44 (GPSGCGKS) participates in ATP binding.

Belongs to the ABC transporter superfamily. sn-glycerol-3-phosphate importer (TC 3.A.1.1.3) family. As to quaternary structure, the complex is composed of two ATP-binding proteins (UgpC), two transmembrane proteins (UgpA and UgpE) and a solute-binding protein (UgpB).

Its subcellular location is the cell inner membrane. It carries out the reaction sn-glycerol 3-phosphate(out) + ATP + H2O = sn-glycerol 3-phosphate(in) + ADP + phosphate + H(+). Part of the ABC transporter complex UgpBAEC involved in sn-glycerol-3-phosphate (G3P) import. Responsible for energy coupling to the transport system. This Brucella abortus biovar 1 (strain 9-941) protein is sn-glycerol-3-phosphate import ATP-binding protein UgpC.